The sequence spans 88 residues: Pape peptide (88 aa).

The signal sequence occupies residues Met1–Ser22. Residues Phe23–Gly45 constitute a propeptide that is removed on maturation. The disordered stretch occupies residues Leu49–Arg88. The span at Glu56–Glu68 shows a compositional bias: pro residues. PAPE repeat units lie at residues Pro57 to Glu60, Pro61 to Glu64, and Pro65 to Glu68. The segment covering Ala69–Ala81 has biased composition (low complexity).

In terms of tissue distribution, expressed by the venom gland.

It is found in the secreted. This Tityus serrulatus (Brazilian scorpion) protein is Pape peptide.